Here is a 281-residue protein sequence, read N- to C-terminus: Imidazoleglycerol-phosphate dehydratase, chloroplastic (281 aa).

The transit peptide at 1 to 85 directs the protein to the chloroplast; that stretch reads MELYAASHSL…TSLPFHPETR (85 aa). Substrate contacts are provided by residues glutamate 95, 121-129, 147-151, arginine 173, and arginine 195; these read HMLDQLASH and HHTNE. 4 residues coordinate Mn(2+): histidine 121, histidine 147, histidine 148, and glutamate 151. 4 residues coordinate Mn(2+): histidine 219, histidine 243, histidine 244, and glutamate 247. Substrate-binding positions include 243–251 and 273–275; these read HHIIEATFK and SSK.

This sequence belongs to the imidazoleglycerol-phosphate dehydratase family. It depends on Mn(2+) as a cofactor.

The protein localises to the plastid. It is found in the chloroplast. It carries out the reaction D-erythro-1-(imidazol-4-yl)glycerol 3-phosphate = 3-(imidazol-4-yl)-2-oxopropyl phosphate + H2O. It functions in the pathway amino-acid biosynthesis; L-histidine biosynthesis; L-histidine from 5-phospho-alpha-D-ribose 1-diphosphate: step 6/9. This is Imidazoleglycerol-phosphate dehydratase, chloroplastic from Pisum sativum (Garden pea).